A 302-amino-acid chain; its full sequence is Transcription factor bHLH7 (302 aa).

The segment at 124–154 (QPMSQPAPPMPHQQSTIRPRVRARRGQATDP) is disordered. The bHLH domain maps to 150-199 (QATDPHSIAERLRRERIAERIRSLQELVPTVNKTDRAAMIDEIVDYVKFL).

As to quaternary structure, homodimer. As to expression, expressed constitutively in roots, leaves, stems and flowers.

Its subcellular location is the nucleus. This chain is Transcription factor bHLH7 (BHLH7), found in Arabidopsis thaliana (Mouse-ear cress).